A 199-amino-acid polypeptide reads, in one-letter code: Single-stranded DNA cytosine deaminase (199 aa).

The Bipartite nuclear localization signal motif lies at 1–30 (MDSLLKKQRQFLYQFKNVRWAKGRHETYLC). The interval 2–26 (DSLLKKQRQFLYQFKNVRWAKGRHE) is interaction with SUPT6H. The CMP/dCMP-type deaminase domain maps to 23–130 (GRHETYLCYV…KAEPEGLRRL (108 aa)). T27 carries the post-translational modification Phosphothreonine; by PKA. S38 is subject to Phosphoserine; by PKA. An important for interaction with CTNNBL1 region spans residues 39–42 (PTSF). H56 is a binding site for Zn(2+). Catalysis depends on E58, which acts as the Proton donor. Residues C87 and C90 each contribute to the Zn(2+) site. A required for interaction with RNF126 region spans residues 88 to 116 (YDCARHVADFLRGYPNLSLRIFTARLYFC). Residues 184-199 (LYEVDDLRDAFRTLGL) carry the Nuclear export signal motif.

The protein belongs to the cytidine and deoxycytidylate deaminase family. In terms of assembly, interacts with CTNNBL1; the interaction is important for the immunoglobulin switch activity of AICDA. Interacts (via its NLS) with KPNA1. Interacts with PKA/PRKACA and PRKAR1A/PKR1. Interacts with SUPT6H, TRIM28 and NCL. Directly interacts with MCM3AP; this interaction may favor AICDA recruitment to immunoglobulin variable region genes, hence promoting somatic hypermutations. The cofactor is Zn(2+). In terms of processing, ser-38 is the major site whereas Thr-27 is the minor site of phosphorylation. Phosphorylation regulates its class-switch recombination activity. Post-translationally, probably monoubiquitinated on several residues by RNF126. As to expression, expressed in lymph nodes, spleen and thymus.

It is found in the nucleus. The protein resides in the cytoplasm. It carries out the reaction a 2'-deoxycytidine in single-stranded DNA + H2O + H(+) = a 2'-deoxyuridine in single-stranded DNA + NH4(+). Its function is as follows. Single-stranded DNA-specific cytidine deaminase. Involved in somatic hypermutation (SHM), gene conversion, and class-switch recombination (CSR) in B-lymphocytes by deaminating C to U during transcription of Ig-variable (V) and Ig-switch (S) region DNA. Required for several crucial steps of B-cell terminal differentiation necessary for efficient antibody responses. May also play a role in the epigenetic regulation of gene expression by participating in DNA demethylation. The chain is Single-stranded DNA cytosine deaminase (AICDA) from Bos taurus (Bovine).